The chain runs to 90 residues: Acylphosphatase (90 aa).

Positions 3 to 88 constitute an Acylphosphatase-like domain; sequence TWHMTAHGRV…GKFEDFDLRP (86 aa). Residues Arg-18 and Asn-36 contribute to the active site.

Belongs to the acylphosphatase family.

The enzyme catalyses an acyl phosphate + H2O = a carboxylate + phosphate + H(+). The sequence is that of Acylphosphatase (acyP) from Cupriavidus pinatubonensis (strain JMP 134 / LMG 1197) (Cupriavidus necator (strain JMP 134)).